Here is a 313-residue protein sequence, read N- to C-terminus: uncharacterized protein (313 aa).

6 helical membrane passes run Ala-16 to Ala-36, Phe-106 to Phe-126, Phe-155 to Phe-175, Leu-208 to Phe-228, Leu-233 to Ala-253, and Phe-286 to Phe-306.

Its subcellular location is the cell membrane. This is an uncharacterized protein from Bacillus subtilis (strain 168).